Here is a 177-residue protein sequence, read N- to C-terminus: Large ribosomal subunit protein uL6 (177 aa).

Over residues 156–171 (PYKGKGVRYDTETIRR) the composition is skewed to basic and acidic residues. A disordered region spans residues 156-177 (PYKGKGVRYDTETIRRKEGKKK).

Belongs to the universal ribosomal protein uL6 family. In terms of assembly, part of the 50S ribosomal subunit.

Functionally, this protein binds to the 23S rRNA, and is important in its secondary structure. It is located near the subunit interface in the base of the L7/L12 stalk, and near the tRNA binding site of the peptidyltransferase center. In Gluconacetobacter diazotrophicus (strain ATCC 49037 / DSM 5601 / CCUG 37298 / CIP 103539 / LMG 7603 / PAl5), this protein is Large ribosomal subunit protein uL6.